A 223-amino-acid chain; its full sequence is Cell division protein SepF (223 aa).

Positions 19–81 (YDDEYYDDRG…YPPPGGYRGG (63 aa)) are disordered. Over residues 36–69 (PRFEDDYGRYEGRDFEDPRRDPRAGMRADLRGEP) the composition is skewed to basic and acidic residues.

The protein belongs to the SepF family. Homodimer. Interacts with FtsZ.

It is found in the cytoplasm. Functionally, cell division protein that is part of the divisome complex and is recruited early to the Z-ring. Probably stimulates Z-ring formation, perhaps through the cross-linking of FtsZ protofilaments. Its function overlaps with FtsA. This Mycobacterium ulcerans (strain Agy99) protein is Cell division protein SepF.